The following is an 884-amino-acid chain: Alanine--tRNA ligase (884 aa).

Residues His568, His572, Cys670, and His674 each coordinate Zn(2+).

This sequence belongs to the class-II aminoacyl-tRNA synthetase family. Zn(2+) is required as a cofactor.

The protein localises to the cytoplasm. It catalyses the reaction tRNA(Ala) + L-alanine + ATP = L-alanyl-tRNA(Ala) + AMP + diphosphate. Catalyzes the attachment of alanine to tRNA(Ala) in a two-step reaction: alanine is first activated by ATP to form Ala-AMP and then transferred to the acceptor end of tRNA(Ala). Also edits incorrectly charged Ser-tRNA(Ala) and Gly-tRNA(Ala) via its editing domain. This is Alanine--tRNA ligase from Synechococcus sp. (strain JA-2-3B'a(2-13)) (Cyanobacteria bacterium Yellowstone B-Prime).